Consider the following 161-residue polypeptide: Cytochrome c-type biogenesis protein CcmE (161 aa).

Topologically, residues methionine 1–arginine 8 are cytoplasmic. Residues leucine 9–alanine 29 traverse the membrane as a helical; Signal-anchor for type II membrane protein segment. The Periplasmic segment spans residues leucine 30–tyrosine 161. Heme-binding residues include histidine 131 and tyrosine 135.

The protein belongs to the CcmE/CycJ family.

It localises to the cell inner membrane. Functionally, heme chaperone required for the biogenesis of c-type cytochromes. Transiently binds heme delivered by CcmC and transfers the heme to apo-cytochromes in a process facilitated by CcmF and CcmH. In Shewanella loihica (strain ATCC BAA-1088 / PV-4), this protein is Cytochrome c-type biogenesis protein CcmE.